We begin with the raw amino-acid sequence, 251 residues long: tRNA pseudouridine synthase A (251 aa).

The Nucleophile role is filled by Asp-26. Position 98 (Tyr-98) interacts with substrate.

Belongs to the tRNA pseudouridine synthase TruA family. In terms of assembly, homodimer.

It carries out the reaction uridine(38/39/40) in tRNA = pseudouridine(38/39/40) in tRNA. In terms of biological role, formation of pseudouridine at positions 38, 39 and 40 in the anticodon stem and loop of transfer RNAs. This Mycolicibacterium paratuberculosis (strain ATCC BAA-968 / K-10) (Mycobacterium paratuberculosis) protein is tRNA pseudouridine synthase A.